Reading from the N-terminus, the 229-residue chain is Protein FAM3C (229 aa).

The signal sequence occupies residues 1–24 (MRIAGAIKFVIAVALFLLTFYVIS). Intrachain disulfides connect cysteine 59/cysteine 87 and cysteine 65/cysteine 222. Residues 68-226 (KHFAFKIASG…VEMEGCIPQK (159 aa)) form the GG-type lectin domain.

Belongs to the FAM3 family.

It is found in the secreted. Functionally, involved in retinal laminar formation. This is Protein FAM3C (fam3c) from Xenopus tropicalis (Western clawed frog).